A 351-amino-acid polypeptide reads, in one-letter code: Peroxisomal membrane protein PEX14 (351 aa).

The disordered stretch occupies residues 54 to 75 (KARTGTVQASPSQQSVVPPRPP). Residues 60-70 (VQASPSQQSVV) show a composition bias toward low complexity. The short motif at 83 to 91 (APPLPERDW) is the SH3-binding element. Positions 243–351 (APQLSTPPSE…RGIPAWQLNA (109 aa)) are disordered. Polar residues predominate over residues 245 to 258 (QLSTPPSESTSRQS). The span at 283-293 (VLSREKDKDVN) shows a compositional bias: basic and acidic residues. The span at 294-303 (SDSIAQYEQR) shows a compositional bias: polar residues. Over residues 320-334 (SASNGGSSTTSGVAG) the composition is skewed to low complexity.

This sequence belongs to the peroxin-14 family. As to quaternary structure, interacts with PEX13 (via SH3 domain); forming the PEX13-PEX14 docking complex. Interacts with PEX5 (via WxxxF/Y motifs).

It localises to the peroxisome membrane. Component of the PEX13-PEX14 docking complex, a translocon channel that specifically mediates the import of peroxisomal cargo proteins bound to PEX5 receptor. The PEX13-PEX14 docking complex forms a large import pore which can be opened to a diameter of about 9 nm. Mechanistically, PEX5 receptor along with cargo proteins associates with the PEX14 subunit of the PEX13-PEX14 docking complex in the cytosol, leading to the insertion of the receptor into the organelle membrane with the concomitant translocation of the cargo into the peroxisome matrix. The chain is Peroxisomal membrane protein PEX14 from Pichia angusta (Yeast).